Reading from the N-terminus, the 767-residue chain is Transducin-like enhancer protein 2 (767 aa).

Residues 1–152 (MYPQGRHPTP…SLLGQQNQLQ (152 aa)) form a q domain region. The interval 153–215 (PLSHAPPVPL…SRVDRAASRS (63 aa)) is GP domain. The segment covering 198-212 (RVGVDAEGSRVDRAA) has biased composition (basic and acidic residues). Disordered stretches follow at residues 198–257 (RVGV…EEDK), 264–283 (VDED…CGKA), and 296–346 (SPAS…SSAS). The segment at 216 to 279 (SSPSPPESLV…SEPPSPVTTP (64 aa)) is ccN domain. Positions 238–242 (KQQRA) match the Nuclear localization signal motif. Position 253 is a phosphoserine; by CK2 (Ser-253). Ser-274 bears the Phosphoserine; by CDK1 mark. The residue at position 278 (Thr-278) is a Phosphothreonine; by CDK1. An SP domain region spans residues 280–447 (CGKAPLCIPA…VAKPAYSFHV (168 aa)). A compositionally biased stretch (low complexity) spans 296–309 (SPASLASSLGSPLP). Ser-306 is modified (phosphoserine). Polar residues predominate over residues 323–346 (TPASRSCGTSPPQDSSTPGPSSAS). WD repeat units follow at residues 479–517 (AHGE…SKTP), 525–564 (NRDN…PRIK), 569–608 (SSAP…MVRQ), 611–650 (GHTD…QLQQ), 693–732 (LHES…SIFQ), and 734–766 (KESS…YEVV).

Belongs to the WD repeat Groucho/TLE family. As to quaternary structure, homooligomer and heterooligomer with other family members. Binds LEF1, TCF7, TCF7L1, TCF7L2, UTY, HES1 and HES5. Ubiquitinated by XIAP/BIRC4. As to expression, expressed in bone marrow-derived macrophages.

It is found in the nucleus. In terms of biological role, transcriptional corepressor that binds to a number of transcription factors. Inhibits the transcriptional activation mediated by CTNNB1 and TCF family members in Wnt signaling. The effects of full-length TLE family members may be modulated by association with dominant-negative AES. This is Transducin-like enhancer protein 2 (Tle2) from Mus musculus (Mouse).